Here is a 308-residue protein sequence, read N- to C-terminus: ADP-L-glycero-D-manno-heptose-6-epimerase (308 aa).

Residues 10–11, 31–32, lysine 38, lysine 53, 75–79, and asparagine 92 contribute to the NADP(+) site; these read MI, DN, and EGACS. The active-site Proton acceptor is tyrosine 140. An NADP(+)-binding site is contributed by lysine 144. A substrate-binding site is contributed by asparagine 169. Residues valine 170 and lysine 178 each contribute to the NADP(+) site. Lysine 178 acts as the Proton acceptor in catalysis. Residues serine 180, histidine 187, 201 to 204, arginine 209, and tyrosine 272 contribute to the substrate site; that span reads FEGS.

The protein belongs to the NAD(P)-dependent epimerase/dehydratase family. HldD subfamily. Homopentamer. Requires NADP(+) as cofactor.

It carries out the reaction ADP-D-glycero-beta-D-manno-heptose = ADP-L-glycero-beta-D-manno-heptose. It functions in the pathway nucleotide-sugar biosynthesis; ADP-L-glycero-beta-D-manno-heptose biosynthesis; ADP-L-glycero-beta-D-manno-heptose from D-glycero-beta-D-manno-heptose 7-phosphate: step 4/4. Functionally, catalyzes the interconversion between ADP-D-glycero-beta-D-manno-heptose and ADP-L-glycero-beta-D-manno-heptose via an epimerization at carbon 6 of the heptose. In Actinobacillus pleuropneumoniae serotype 5b (strain L20), this protein is ADP-L-glycero-D-manno-heptose-6-epimerase.